Here is a 734-residue protein sequence, read N- to C-terminus: Ribosomal biogenesis protein LAS1L (734 aa).

A disordered region spans residues 204–255; sequence EGIEEEDQEEDKNIVVDDITEQKPEPQDDGKSTESDVKADGDSKGSEEVDSH. The span at 214–255 shows a compositional bias: basic and acidic residues; it reads DKNIVVDDITEQKPEPQDDGKSTESDVKADGDSKGSEEVDSH. Residues Lys215 and Lys226 each participate in a glycyl lysine isopeptide (Lys-Gly) (interchain with G-Cter in SUMO2) cross-link. Ser441, Ser523, and Ser560 each carry phosphoserine. The segment covering 547-561 has biased composition (polar residues); that stretch reads GSEAKAQQQEEQGSV. The tract at residues 547–619 is disordered; it reads GSEAKAQQQE…PFSTGQESPT (73 aa). The span at 563 to 575 shows a compositional bias: basic and acidic residues; that stretch reads DVKEEEKEEKEVL. Acidic residues predominate over residues 578–605; sequence QVEEEEENDDQEEEEEDEDDEDDEEEDR. The residue at position 617 (Ser617) is a Phosphoserine. An interaction with NOL9 region spans residues 636 to 655; sequence SAWQVSSEDVRWDTFPLGRM.

Belongs to the LAS1 family. As to quaternary structure, component of some MLL1/MLL complex, at least composed of the core components KMT2A/MLL1, ASH2L, HCFC1/HCF1, WDR5 and RBBP5, as well as the facultative components BACC1, CHD8, E2F6, HSP70, INO80C, KANSL1, LAS1L, MAX, MCRS1, MGA, KAT8/MOF, PELP1, PHF20, PRP31, RING2, RUVB1/TIP49A, RUVB2/TIP49B, SENP3, TAF1, TAF4, TAF6, TAF7, TAF9 and TEX10. Component of the 5FMC complex, at least composed of PELP1, LAS1L, TEX10, WDR18 and SENP3; the complex interacts with methylated CHTOP and ZNF148. Interacts with NOL9 to form an ITS2 pre-rRNA endonuclease-kinase complex.

The protein resides in the nucleus. The protein localises to the nucleolus. Its subcellular location is the nucleoplasm. It localises to the cytoplasm. Required for the synthesis of the 60S ribosomal subunit and maturation of the 28S rRNA. Functions as a component of the Five Friends of Methylated CHTOP (5FMC) complex; the 5FMC complex is recruited to ZNF148 by methylated CHTOP, leading to desumoylation of ZNF148 and subsequent transactivation of ZNF148 target genes. Required for the efficient pre-rRNA processing at both ends of internal transcribed spacer 2 (ITS2). In Homo sapiens (Human), this protein is Ribosomal biogenesis protein LAS1L (LAS1L).